The following is a 125-amino-acid chain: Protein ApaG (125 aa).

Residues 1-125 (MINSPRVCIQ…FRLAVPTLIH (125 aa)) form the ApaG domain.

This is Protein ApaG from Salmonella arizonae (strain ATCC BAA-731 / CDC346-86 / RSK2980).